Consider the following 464-residue polypeptide: 3-deoxy-D-manno-octulosonic acid transferase (464 aa).

Residues 2–22 (MLLYYALSFILLPIYFIIILI) form a helical; Signal-anchor membrane-spanning segment. One can recognise an RPE1 insert domain in the interval 47–93 (YSLDFLHNEANKERFKGDTERRTAAYTSVREDSSTGSTSKLPLEASY). The Proton acceptor role is filled by Glu-107. Residues 311 to 312 (PR), 352 to 354 (FGE), and 377 to 380 (NILE) contribute to the CMP site.

The protein belongs to the glycosyltransferase group 1 family.

It localises to the cell inner membrane. The catalysed reaction is lipid IVA (E. coli) + CMP-3-deoxy-beta-D-manno-octulosonate = alpha-Kdo-(2-&gt;6)-lipid IVA (E. coli) + CMP + H(+). Its pathway is bacterial outer membrane biogenesis; LPS core biosynthesis. In terms of biological role, involved in lipopolysaccharide (LPS) biosynthesis. Catalyzes the transfer of 3-deoxy-D-manno-octulosonate (Kdo) residue(s) from CMP-Kdo to lipid IV(A), the tetraacyldisaccharide-1,4'-bisphosphate precursor of lipid A. The sequence is that of 3-deoxy-D-manno-octulosonic acid transferase (waaA) from Rickettsia felis (strain ATCC VR-1525 / URRWXCal2) (Rickettsia azadi).